Here is a 377-residue protein sequence, read N- to C-terminus: Nitric oxide reductase FlRd-NAD(+) reductase (377 aa).

Belongs to the FAD-dependent oxidoreductase family. The cofactor is FAD.

It localises to the cytoplasm. It carries out the reaction 2 reduced [nitric oxide reductase rubredoxin domain] + NAD(+) + H(+) = 2 oxidized [nitric oxide reductase rubredoxin domain] + NADH. Its pathway is nitrogen metabolism; nitric oxide reduction. Functionally, one of at least two accessory proteins for anaerobic nitric oxide (NO) reductase. Reduces the rubredoxin moiety of NO reductase. In Escherichia coli (strain 55989 / EAEC), this protein is Nitric oxide reductase FlRd-NAD(+) reductase.